We begin with the raw amino-acid sequence, 145 residues long: Large ribosomal subunit protein bL9 (145 aa).

The protein belongs to the bacterial ribosomal protein bL9 family.

In terms of biological role, binds to the 23S rRNA. The protein is Large ribosomal subunit protein bL9 of Mesomycoplasma hyopneumoniae (strain 232) (Mycoplasma hyopneumoniae).